The primary structure comprises 123 residues: Hydrogenase maturation factor HypA (123 aa).

His-2 provides a ligand contact to Ni(2+). Positions 73, 76, 90, and 93 each coordinate Zn(2+).

It belongs to the HypA/HybF family.

Its function is as follows. Involved in the maturation of [NiFe] hydrogenases. Required for nickel insertion into the metal center of the hydrogenase. This Roseiflexus sp. (strain RS-1) protein is Hydrogenase maturation factor HypA.